The sequence spans 349 residues: Interleukin-10 receptor subunit beta (349 aa).

An N-terminal signal peptide occupies residues 1–19 (MAPCVAGWLGGFLLVPALG). The Extracellular segment spans residues 20-220 (MIPPPEKVRM…RTGNDEITPS (201 aa)). Fibronectin type-III domains are found at residues 23–111 (PPEK…VEDT) and 112–215 (IIGP…TGND). Asparagine 49 carries N-linked (GlcNAc...) asparagine glycosylation. A disulfide bridge links cysteine 66 with cysteine 74. Residues asparagine 102, asparagine 161, and asparagine 199 are each glycosylated (N-linked (GlcNAc...) asparagine). A disulfide bridge connects residues cysteine 188 and cysteine 209. Residues 221-241 (WIVAIILIVSVLVVFLFLLGC) traverse the membrane as a helical segment. Residues 242–349 (FVVLWLIYKK…PKLLTSTSEV (108 aa)) lie on the Cytoplasmic side of the membrane. A Phosphoserine modification is found at serine 299. The tract at residues 300–349 (EESEGSKQSPEDNCASEPPSDPGPRELESKDEAPSPPHDDPKLLTSTSEV) is disordered. Residues 322–341 (GPRELESKDEAPSPPHDDPK) show a composition bias toward basic and acidic residues.

The protein belongs to the type II cytokine receptor family. As to quaternary structure, heterodimer with IFNLR1.

The protein localises to the membrane. In terms of biological role, shared cell surface receptor required for the activation of five class 2 cytokines: IL10, IL22, IL26, IL28, and IFNL1. The IFNLR1/IL10RB dimer is a receptor for the cytokine ligands IFNL2 and IFNL3 and mediates their antiviral activity. The ligand/receptor complex stimulate the activation of the JAK/STAT signaling pathway leading to the expression of IFN-stimulated genes (ISG), which contribute to the antiviral state. The polypeptide is Interleukin-10 receptor subunit beta (Il10rb) (Mus musculus (Mouse)).